The sequence spans 475 residues: WASH complex subunit 1 (475 aa).

Residues 1–54 are required for WASH complex assembly; the sequence is MTAVKTQHSLAGQVYAVPLIQPDLRREEAIQQVADALQYLQNISGDIFSRISQR. Residues 1 to 167 form a WHD1 region; it reads MTAVKTQHSL…EGLGGLPSNI (167 aa). A Glycyl lysine isopeptide (Lys-Gly) (interchain with G-Cter in ubiquitin) cross-link involves residue Lys219. The segment at 296-475 is disordered; sequence EDGALLAPPP…GDEDEDDWES (180 aa). The span at 302 to 318 shows a compositional bias: pro residues; it reads APPPPPPPPPPPPPPAP. The segment at 357-475 is VCA; the sequence is QGAPKEVVDP…GDEDEDDWES (119 aa). One can recognise a WH2 domain in the interval 369–391; that stretch reads GRATLLESIRQAGGIGKAKLRSV. Over residues 390-406 the composition is skewed to basic and acidic residues; it reads SVKERKLEKKKQKEQEQ. Residues 432-446 show a composition bias toward gly residues; that stretch reads SGKGPGTGTSEGPGG. The segment covering 466–475 has biased composition (acidic residues); it reads GDEDEDDWES.

The protein belongs to the WASH1 family. As to quaternary structure, component of the WASH core complex also described as WASH regulatory complex SHRC composed of WASHC1, WASHC2, WASHC3, WASHC4 and WASHC5. The WASH core complex associates with the F-actin-capping protein dimer (formed by CAPZA1, CAPZA2 or CAPZA3 and CAPZB) in a transient or substoichiometric manner which was initially described as WASH complex. Interacts (via WHD1 region) with WASHC2; the interaction is direct. Interacts with BECN1; WASHC1 and AMBRA1 can competitively interact with BECN1. Interacts with BLOC1S2; may associate with the BLOC-1 complex. Interacts with tubulin gamma chain (TUBG1 or TUBG2). Interacts with TBC1D23. Ubiquitinated at Lys-219 via 'Lys-63'-linked ubiquitin chains by the TRIM27:MAGEL2 E3 ubiquitin ligase complex, leading to promote endosomal F-actin assembly.

Its subcellular location is the early endosome membrane. The protein localises to the recycling endosome membrane. Functionally, acts as a component of the WASH core complex that functions as a nucleation-promoting factor (NPF) at the surface of endosomes, where it recruits and activates the Arp2/3 complex to induce actin polymerization, playing a key role in the fission of tubules that serve as transport intermediates during endosome sorting. Regulates the trafficking of endosomal alpha5beta1 integrin to the plasma membrane and involved in invasive cell migration. In T-cells involved in endosome-to-membrane recycling of receptors including T-cell receptor (TCR), CD28 and ITGAL; proposed to be implicated in T-cell proliferation and effector function. In dendritic cells involved in endosome-to-membrane recycling of major histocompatibility complex (MHC) class II probably involving retromer and subsequently allowing antigen sampling, loading and presentation during T-cell activation. Involved in cytokinesis and following polar body extrusion during oocyte meiotic maturation. Involved in Arp2/3 complex-dependent actin assembly driving Salmonella typhimurium invasion independent of ruffling. Involved in the exocytosis of MMP14 leading to matrix remodeling during invasive migration and implicating late endosome-to-plasma membrane tubular connections and cooperation with the exocyst complex. Involved in negative regulation of autophagy independently from its role in endosomal sorting by inhibiting BECN1 ubiquitination to inactivate PIK3C3/Vps34 activity. The chain is WASH complex subunit 1 from Rattus norvegicus (Rat).